The sequence spans 560 residues: Membrane protein insertase YidC (560 aa).

Residues 7 to 27 form a helical membrane-spanning segment; sequence ILIVALAIVSYVMVLKWNQDY. A compositionally biased stretch (polar residues) spans 38–56; it reads ASSTTTSGLPDTATGNNAA. Positions 38–76 are disordered; that stretch reads ASSTTTSGLPDTATGNNAAASDDIPRAASDTSAPAETPV. Transmembrane regions (helical) follow at residues 367 to 387, 437 to 457, 468 to 488, and 515 to 535; these read IVGN…GIFF, LGGC…YWVL, FMLW…PIIM, and PIIF…YWVV.

The protein belongs to the OXA1/ALB3/YidC family. Type 1 subfamily. Interacts with the Sec translocase complex via SecD. Specifically interacts with transmembrane segments of nascent integral membrane proteins during membrane integration.

Its subcellular location is the cell inner membrane. Functionally, required for the insertion and/or proper folding and/or complex formation of integral membrane proteins into the membrane. Involved in integration of membrane proteins that insert both dependently and independently of the Sec translocase complex, as well as at least some lipoproteins. Aids folding of multispanning membrane proteins. The chain is Membrane protein insertase YidC from Pseudomonas fluorescens (strain Pf0-1).